The sequence spans 64 residues: Large ribosomal subunit protein bL35 (64 aa).

Belongs to the bacterial ribosomal protein bL35 family.

The chain is Large ribosomal subunit protein bL35 from Pelodictyon phaeoclathratiforme (strain DSM 5477 / BU-1).